Here is a 652-residue protein sequence, read N- to C-terminus: Carboxypeptidase S1 homolog A (652 aa).

The signal sequence occupies residues 1–19; sequence MRFAASIAVALPVIHAASA. C50 and C121 are oxidised to a cystine. N-linked (GlcNAc...) asparagine glycosylation is found at N77, N132, N161, N168, N184, and N202. S238 is a catalytic residue. Residues N260, N299, N347, and N410 are each glycosylated (N-linked (GlcNAc...) asparagine). Cystine bridges form between C325/C361 and C332/C354. D458 is a catalytic residue. Substrate is bound at residue C461. N-linked (GlcNAc...) asparagine glycans are attached at residues N474, N492, and N505. The active site involves H516. Position 517 (E517) interacts with substrate. The interval 608–627 is disordered; that stretch reads AASKGNPPPTTTSSPTAAPT. Low complexity predominate over residues 618–627; the sequence is TTSSPTAAPT. A lipid anchor (GPI-anchor amidated glycine) is attached at G629. The propeptide at 630–652 is removed in mature form; sequence SAMLKAPVAMLAISALTVLAFFL.

Belongs to the peptidase S10 family.

The protein localises to the cell membrane. The catalysed reaction is Preferential release of a C-terminal arginine or lysine residue.. Its function is as follows. Extracellular serine carboxypeptidase that contributes to pathogenicity. The polypeptide is Carboxypeptidase S1 homolog A (SCPA) (Trichophyton rubrum (Athlete's foot fungus)).